Reading from the N-terminus, the 86-residue chain is Exodeoxyribonuclease 7 small subunit (86 aa).

It belongs to the XseB family. In terms of assembly, heterooligomer composed of large and small subunits.

Its subcellular location is the cytoplasm. The enzyme catalyses Exonucleolytic cleavage in either 5'- to 3'- or 3'- to 5'-direction to yield nucleoside 5'-phosphates.. Its function is as follows. Bidirectionally degrades single-stranded DNA into large acid-insoluble oligonucleotides, which are then degraded further into small acid-soluble oligonucleotides. The chain is Exodeoxyribonuclease 7 small subunit from Xanthomonas oryzae pv. oryzae (strain MAFF 311018).